The chain runs to 99 residues: Ferredoxin, vegetative (99 aa).

Residues 4–96 (YQVRLINKKR…DCTIRTHQEP (93 aa)) form the 2Fe-2S ferredoxin-type domain. Residues Cys-42, Cys-47, Cys-50, and Cys-80 each coordinate [2Fe-2S] cluster.

Belongs to the 2Fe2S plant-type ferredoxin family. It depends on [2Fe-2S] cluster as a cofactor.

Its function is as follows. Ferredoxins are iron-sulfur proteins that transfer electrons in a wide variety of metabolic reactions. Donates electrons to the nitrogenase 2. In Trichormus variabilis (strain ATCC 29413 / PCC 7937) (Anabaena variabilis), this protein is Ferredoxin, vegetative (fdxH2).